The chain runs to 248 residues: Pyridoxine 5'-phosphate synthase (248 aa).

Residue asparagine 12 coordinates 3-amino-2-oxopropyl phosphate. Residue 14-15 (DH) participates in 1-deoxy-D-xylulose 5-phosphate binding. Arginine 23 is a 3-amino-2-oxopropyl phosphate binding site. Residue histidine 48 is the Proton acceptor of the active site. 1-deoxy-D-xylulose 5-phosphate-binding residues include arginine 50 and histidine 55. Glutamate 75 (proton acceptor) is an active-site residue. Threonine 105 lines the 1-deoxy-D-xylulose 5-phosphate pocket. Histidine 196 (proton donor) is an active-site residue. Residues glycine 197 and 218 to 219 (GH) contribute to the 3-amino-2-oxopropyl phosphate site.

Belongs to the PNP synthase family. Homooctamer; tetramer of dimers.

It localises to the cytoplasm. The enzyme catalyses 3-amino-2-oxopropyl phosphate + 1-deoxy-D-xylulose 5-phosphate = pyridoxine 5'-phosphate + phosphate + 2 H2O + H(+). It functions in the pathway cofactor biosynthesis; pyridoxine 5'-phosphate biosynthesis; pyridoxine 5'-phosphate from D-erythrose 4-phosphate: step 5/5. Functionally, catalyzes the complicated ring closure reaction between the two acyclic compounds 1-deoxy-D-xylulose-5-phosphate (DXP) and 3-amino-2-oxopropyl phosphate (1-amino-acetone-3-phosphate or AAP) to form pyridoxine 5'-phosphate (PNP) and inorganic phosphate. This chain is Pyridoxine 5'-phosphate synthase, found in Azotobacter vinelandii (strain DJ / ATCC BAA-1303).